Consider the following 555-residue polypeptide: GPI-anchor transamidase component PIGS (555 aa).

Topologically, residues 2-18 (AATGAAATDLEVVRGKR) are cytoplasmic. Arginine 15 and arginine 18 together coordinate a cardiolipin. A helical transmembrane segment spans residues 19 to 39 (AALFFATVVIVLGLPLWWKTT). At 40 to 517 (ETYRAPLPYS…LHLLYFPDDQ (478 aa)) the chain is on the lumenal side. N-linked (GlcNAc...) asparagine glycans are attached at residues asparagine 267 and asparagine 370. Residues 518–532 (KFAIYIPLFLPMAVP) form a helical membrane-spanning segment. Topologically, residues 533 to 555 (ILLSLFKIFLETRKSWKKPEKTD) are cytoplasmic.

Belongs to the PIGS family. In terms of assembly, heteropentamer. Part of the GPI-anchor transamidase complex, consisting of PIGK, PIGT, PIGS, PIGU and GAA1.

The protein localises to the endoplasmic reticulum membrane. Its pathway is glycolipid biosynthesis; glycosylphosphatidylinositol-anchor biosynthesis. Its function is as follows. Component of the glycosylphosphatidylinositol-anchor (GPI-anchor) transamidase (GPI-T) complex that catalyzes the formation of the linkage between a proprotein and a GPI-anchor and participates in GPI anchored protein biosynthesis. This Bos taurus (Bovine) protein is GPI-anchor transamidase component PIGS.